Here is a 637-residue protein sequence, read N- to C-terminus: Early transcription factor 70 kDa subunit (637 aa).

The region spanning 32–185 is the Helicase ATP-binding domain; sequence RTIIDENRSV…GHIIDLMSEE (154 aa). 45-52 is a binding site for ATP; sequence HIMGSGKT. The short motif at 135 to 138 is the DEXH box element; the sequence is DEAH. Residues 327–507 enclose the Helicase C-terminal domain; that stretch reads KFKYFINRIQ…VLPFDIKKLL (181 aa).

Belongs to the helicase family. VETF subfamily. Heterodimer of a 70 kDa and a 82 kDa subunit. Part of the early transcription complex composed of ETF, RAP94/OPG109, and the DNA-directed RNA polymerase.

The protein localises to the virion. Functionally, acts with RNA polymerase to initiate transcription from early gene promoters. Is recruited by the RPO-associated protein of 94 kDa RAP94/OPG109 to form the early transcription complex, which also contains the core RNA polymerase. ETF heterodimer binds to early gene promoters. The protein is Early transcription factor 70 kDa subunit (OPG118) of Homo sapiens (Human).